We begin with the raw amino-acid sequence, 918 residues long: Serine/threonine-protein kinase D1 (918 aa).

Tyr93 is modified (phosphotyrosine). The segment at Pro144–Cys194 adopts a Phorbol-ester/DAG-type 1 zinc-finger fold. A phosphoserine mark is found at Ser203, Ser206, Ser217, and Ser221. A Phorbol-ester/DAG-type 2 zinc finger spans residues Pro276–Cys326. 2 disordered regions span residues Ser338–Leu362 and Ala379–Ile410. Residues Val345–Asp355 are compositionally biased toward acidic residues. Ser351 is modified (phosphoserine). The span at Arg400 to Ile410 shows a compositional bias: polar residues. Phosphoserine; by MAPK13 is present on residues Ser403 and Ser407. The PH domain maps to Thr428–Met547. A Phosphotyrosine modification is found at Tyr438. The residue at position 454 (Ser454) is a Phosphoserine. Tyr469 carries the post-translational modification Phosphotyrosine; by ABL. The residue at position 508 (Tyr508) is a Phosphotyrosine. Ser554 is modified (phosphoserine). The Protein kinase domain occupies Ile589–Leu845. Residues Leu595 to Val603 and Lys618 contribute to the ATP site. Residue Asp712 is the Proton acceptor of the active site. Residue Ser744 is modified to Phosphoserine; by PKC/PRKCD. Ser748 bears the Phosphoserine; by autocatalysis and PKC/PRKCD mark. At Tyr755 the chain carries Phosphotyrosine. Position 916 is a phosphoserine; by autocatalysis (Ser916).

It belongs to the protein kinase superfamily. CAMK Ser/Thr protein kinase family. PKD subfamily. As to quaternary structure, interacts (via N-terminus) with ADAP1/CENTA1. Interacts with MAPK13. Interacts with DAPK1 in an oxidative stress-regulated manner. Interacts with USP28; the interaction induces phosphorylation of USP28 and activated KRAS-mediated stabilization of ZNF304. Interacts with AKAP13 (via C-terminal domain). Mg(2+) is required as a cofactor. Phosphorylated at Ser-403 and Ser-407 by MAPK13 during regulation of insulin secretion in pancreatic beta cells. Phosphorylated by DAPK1. Phosphorylated at Tyr-93 and by ABL at Tyr-469, which primes the kinase in response to oxidative stress, and promotes a second step activating phosphorylation at Ser-744/Ser-748 by PKRD. Phosphorylated at Ser-916 upon S.enterica infection in macrophages.

The protein localises to the cytoplasm. Its subcellular location is the cell membrane. The protein resides in the golgi apparatus. It is found in the trans-Golgi network. It catalyses the reaction L-seryl-[protein] + ATP = O-phospho-L-seryl-[protein] + ADP + H(+). It carries out the reaction L-threonyl-[protein] + ATP = O-phospho-L-threonyl-[protein] + ADP + H(+). Activated by DAG and phorbol esters. Phorbol-ester/DAG-type domain 1 binds DAG with high affinity and appears to play the dominant role in mediating translocation to the cell membrane and trans-Golgi network. Phorbol-ester/DAG-type domain 2 binds phorbol ester with higher affinity. Autophosphorylation of Ser-748 and phosphorylation of Ser-744 by PKC relieves auto-inhibition by the PH domain. Phosphorylation on Tyr-469 by the SRC-ABL1 pathway in response to oxidative stress, is also required for activation. Activated by DAPK1 under oxidative stress. Functionally, serine/threonine-protein kinase that converts transient diacylglycerol (DAG) signals into prolonged physiological effects downstream of PKC, and is involved in the regulation of MAPK8/JNK1 and Ras signaling, Golgi membrane integrity and trafficking, cell survival through NF-kappa-B activation, cell migration, cell differentiation by mediating HDAC7 nuclear export, cell proliferation via MAPK1/3 (ERK1/2) signaling, and plays a role in cardiac hypertrophy, VEGFA-induced angiogenesis, genotoxic-induced apoptosis and flagellin-stimulated inflammatory response. Phosphorylates the epidermal growth factor receptor (EGFR) on dual threonine residues, which leads to the suppression of epidermal growth factor (EGF)-induced MAPK8/JNK1 activation and subsequent JUN phosphorylation. Phosphorylates RIN1, inducing RIN1 binding to 14-3-3 proteins YWHAB, YWHAE and YWHAZ and increased competition with RAF1 for binding to GTP-bound form of Ras proteins (NRAS, HRAS and KRAS). Acts downstream of the heterotrimeric G-protein beta/gamma-subunit complex to maintain the structural integrity of the Golgi membranes, and is required for protein transport along the secretory pathway. In the trans-Golgi network (TGN), regulates the fission of transport vesicles that are on their way to the plasma membrane. May act by activating the lipid kinase phosphatidylinositol 4-kinase beta (PI4KB) at the TGN for the local synthesis of phosphorylated inositol lipids, which induces a sequential production of DAG, phosphatidic acid (PA) and lyso-PA (LPA) that are necessary for membrane fission and generation of specific transport carriers to the cell surface. Under oxidative stress, is phosphorylated at Tyr-469 via SRC-ABL1 and contributes to cell survival by activating IKK complex and subsequent nuclear translocation and activation of NFKB1. Involved in cell migration by regulating integrin alpha-5/beta-3 recycling and promoting its recruitment in newly forming focal adhesion. In osteoblast differentiation, mediates the bone morphogenetic protein 2 (BMP2)-induced nuclear export of HDAC7, which results in the inhibition of HDAC7 transcriptional repression of RUNX2. In neurons, plays an important role in neuronal polarity by regulating the biogenesis of TGN-derived dendritic vesicles, and is involved in the maintenance of dendritic arborization and Golgi structure in hippocampal cells. May potentiate mitogenesis induced by the neuropeptide bombesin or vasopressin by mediating an increase in the duration of MAPK1/3 (ERK1/2) signaling, which leads to accumulation of immediate-early gene products including FOS that stimulate cell cycle progression. Plays an important role in the proliferative response induced by low calcium in keratinocytes, through sustained activation of MAPK1/3 (ERK1/2) pathway. Downstream of novel PKC signaling, plays a role in cardiac hypertrophy by phosphorylating HDAC5, which in turn triggers XPO1/CRM1-dependent nuclear export of HDAC5, MEF2A transcriptional activation and induction of downstream target genes that promote myocyte hypertrophy and pathological cardiac remodeling. Mediates cardiac troponin I (TNNI3) phosphorylation at the PKA sites, which results in reduced myofilament calcium sensitivity, and accelerated crossbridge cycling kinetics. The PRKD1-HDAC5 pathway is also involved in angiogenesis by mediating VEGFA-induced specific subset of gene expression, cell migration, and tube formation. In response to VEGFA, is necessary and required for HDAC7 phosphorylation which induces HDAC7 nuclear export and endothelial cell proliferation and migration. During apoptosis induced by cytarabine and other genotoxic agents, PRKD1 is cleaved by caspase-3 at Asp-378, resulting in activation of its kinase function and increased sensitivity of cells to the cytotoxic effects of genotoxic agents. In epithelial cells, is required for transducing flagellin-stimulated inflammatory responses by binding and phosphorylating TLR5, which contributes to MAPK14/p38 activation and production of inflammatory cytokines. Acts as an activator of NLRP3 inflammasome assembly by mediating phosphorylation of NLRP3. May play a role in inflammatory response by mediating activation of NF-kappa-B. May be involved in pain transmission by directly modulating TRPV1 receptor. Plays a role in activated KRAS-mediated stabilization of ZNF304 in colorectal cancer (CRC) cells. Regulates nuclear translocation of transcription factor TFEB in macrophages upon live S.enterica infection. The polypeptide is Serine/threonine-protein kinase D1 (Prkd1) (Mus musculus (Mouse)).